The chain runs to 833 residues: Probable glucan 1,3-beta-glucosidase D (833 aa).

The segment covering 1-33 has biased composition (basic and acidic residues); it reads MPTHSRSRDRYGGRDSDREARYDYDYARRRYAT. A disordered region spans residues 1–228; sequence MPTHSRSRDR…RKRQKKLAVV (228 aa). At 1-305 the chain is on the cytoplasmic side; it reads MPTHSRSRDR…GGRPFWKRKR (305 aa). A compositionally biased stretch (acidic residues) spans 34–45; it reads DDDDDYDDDELE. 2 stretches are compositionally biased toward basic and acidic residues: residues 46-75 and 97-172; these read HDLT…RDAE and YGDD…ETAA. A compositionally biased stretch (low complexity) spans 183–196; it reads SASHLLSADALAKL. Residues 200–217 are compositionally biased toward basic and acidic residues; it reads YEKEERRKREIAKDAAKA. The helical; Signal-anchor for type II membrane protein transmembrane segment at 306-326 threads the bilayer; the sequence is WIGLGALIIILVIVIPVAVVV. The Extracellular segment spans residues 327 to 833; the sequence is SKKHDNKSDP…PDFGDLPEYY (507 aa). Residues 331–353 are disordered; it reads DNKSDPADSQGTSPGKSNLDGLS. N-linked (GlcNAc...) asparagine glycosylation is present at Asn-332. Over residues 337 to 346 the composition is skewed to polar residues; the sequence is ADSQGTSPGK. N-linked (GlcNAc...) asparagine glycans are attached at residues Asn-378, Asn-383, Asn-395, Asn-548, Asn-560, and Asn-569. Glu-599 serves as the catalytic Proton donor. Asn-638, Asn-671, and Asn-691 each carry an N-linked (GlcNAc...) asparagine glycan. Catalysis depends on Glu-704, which acts as the Nucleophile.

Belongs to the glycosyl hydrolase 5 (cellulase A) family.

The protein localises to the cell membrane. The catalysed reaction is Successive hydrolysis of beta-D-glucose units from the non-reducing ends of (1-&gt;3)-beta-D-glucans, releasing alpha-glucose.. Glucosidase involved in the degradation of cellulosic biomass. Active on lichenan. This is Probable glucan 1,3-beta-glucosidase D (exgD) from Aspergillus fumigatus (strain CBS 144.89 / FGSC A1163 / CEA10) (Neosartorya fumigata).